We begin with the raw amino-acid sequence, 316 residues long: Protoheme IX farnesyltransferase (316 aa).

A run of 9 helical transmembrane segments spans residues 29-49, 54-74, 102-122, 123-143, 151-171, 179-199, 224-241, 245-267, and 283-303; these read IIPL…EGRV, LLIT…LNCI, LIFA…FVNV, LSGC…THWL, IVIG…AVTG, VLFA…ALMI, IWYY…LVYP, LGIL…AWQL, and FSIF…LPVT.

It belongs to the UbiA prenyltransferase family. Protoheme IX farnesyltransferase subfamily.

The protein localises to the cell inner membrane. The catalysed reaction is heme b + (2E,6E)-farnesyl diphosphate + H2O = Fe(II)-heme o + diphosphate. The protein operates within porphyrin-containing compound metabolism; heme O biosynthesis; heme O from protoheme: step 1/1. Its function is as follows. Converts heme B (protoheme IX) to heme O by substitution of the vinyl group on carbon 2 of heme B porphyrin ring with a hydroxyethyl farnesyl side group. The sequence is that of Protoheme IX farnesyltransferase from Synechocystis sp. (strain ATCC 27184 / PCC 6803 / Kazusa).